Here is a 79-residue protein sequence, read N- to C-terminus: MSRLGIMVLTLLLLVFIVTSHQDAGEKQATQRDAINFRWRRSLIRRTATEECEEYCEDEEKTCCGLEDGEPVCATTCLG.

Positions 1–20 (MSRLGIMVLTLLLLVFIVTS) are cleaved as a signal peptide. Residues 21–44 (HQDAGEKQATQRDAINFRWRRSLI) constitute a propeptide that is removed on maturation. 3 cysteine pairs are disulfide-bonded: Cys-52-Cys-64, Cys-56-Cys-73, and Cys-63-Cys-77. Leu-78 bears the Leucine amide mark.

Belongs to the conotoxin O3 superfamily. In terms of tissue distribution, expressed by the venom duct.

It localises to the secreted. The chain is Conotoxin PnMSGL-03 from Conus pennaceus (Feathered cone).